The primary structure comprises 772 residues: Acyl-homoserine lactone acylase PvdQ (772 aa).

A signal peptide spans 1-28 (MPVFPFCRPMTCAGLAAALVAFSVGVQA). A propeptide spans 199–220 (AQSSAGFASALARQERFAAERG) (spacer peptide). S221 (nucleophile) is an active-site residue.

This sequence belongs to the peptidase S45 family. As to quaternary structure, heterodimer of an alpha subunit and a beta subunit processed from the same precursor.

It is found in the periplasm. It carries out the reaction an N-acyl-L-homoserine lactone + H2O = L-homoserine lactone + a carboxylate. In terms of biological role, catalyzes the deacylation of acyl-homoserine lactone (AHL or acyl-HSL), releasing homoserine lactone (HSL) and the corresponding fatty acid. Possesses a specificity for the degradation of long-chain acyl-HSLs (side chains of 11 to 14 carbons in length). This is Acyl-homoserine lactone acylase PvdQ (pvdQ) from Pseudomonas putida (strain ATCC 47054 / DSM 6125 / CFBP 8728 / NCIMB 11950 / KT2440).